The sequence spans 609 residues: Rhotekin-2 (609 aa).

Residues 5 to 81 enclose the REM-1 domain; it reads SLRGPALRLA…LQKLEEQIAN (77 aa). A coiled-coil region spans residues 56–91; sequence KNLMVCNARLMAYTSELQKLEEQIANQTGRCDVKFE. The 108-residue stretch at 286–393 folds into the PH domain; sequence EDAFAGFLNQ…WMEAFWQHFF (108 aa). Disordered regions lie at residues 495 to 520 and 554 to 609; these read HDEK…KSQS and KPMA…QAQV. A compositionally biased stretch (basic and acidic residues) spans 569 to 582; it reads RLSDGEHTDTKTNF.

Expressed in lymphocytes, CD4 positive T-cells and bone marrow-derived cells. Also expressed in lung, colon, thymus and brain.

Functionally, may play an important role in lymphopoiesis. This chain is Rhotekin-2 (RTKN2), found in Homo sapiens (Human).